The sequence spans 105 residues: Large ribosomal subunit protein uL24 (105 aa).

Positions 67–105 (HISNLNPVDPKTGKATRIGRRKSSEGTLVRYSKKSGEEI) are disordered.

The protein belongs to the universal ribosomal protein uL24 family. Part of the 50S ribosomal subunit.

Functionally, one of two assembly initiator proteins, it binds directly to the 5'-end of the 23S rRNA, where it nucleates assembly of the 50S subunit. Its function is as follows. One of the proteins that surrounds the polypeptide exit tunnel on the outside of the subunit. The chain is Large ribosomal subunit protein uL24 from Bacteroides thetaiotaomicron (strain ATCC 29148 / DSM 2079 / JCM 5827 / CCUG 10774 / NCTC 10582 / VPI-5482 / E50).